Here is a 405-residue protein sequence, read N- to C-terminus: Tryptophan synthase beta chain (405 aa).

Lysine 96 is modified (N6-(pyridoxal phosphate)lysine).

This sequence belongs to the TrpB family. In terms of assembly, tetramer of two alpha and two beta chains. Pyridoxal 5'-phosphate serves as cofactor.

It catalyses the reaction (1S,2R)-1-C-(indol-3-yl)glycerol 3-phosphate + L-serine = D-glyceraldehyde 3-phosphate + L-tryptophan + H2O. It participates in amino-acid biosynthesis; L-tryptophan biosynthesis; L-tryptophan from chorismate: step 5/5. The beta subunit is responsible for the synthesis of L-tryptophan from indole and L-serine. The chain is Tryptophan synthase beta chain from Clostridium botulinum (strain Alaska E43 / Type E3).